Here is a 317-residue protein sequence, read N- to C-terminus: Ribosomal protein L11 methyltransferase (317 aa).

Residues Thr-158, Gly-179, Asp-201, and Asn-244 each coordinate S-adenosyl-L-methionine.

It belongs to the methyltransferase superfamily. PrmA family.

The protein resides in the cytoplasm. It carries out the reaction L-lysyl-[protein] + 3 S-adenosyl-L-methionine = N(6),N(6),N(6)-trimethyl-L-lysyl-[protein] + 3 S-adenosyl-L-homocysteine + 3 H(+). Its function is as follows. Methylates ribosomal protein L11. This is Ribosomal protein L11 methyltransferase from Streptococcus equi subsp. zooepidemicus (strain H70).